The chain runs to 188 residues: Archaemetzincin (188 aa).

His137 is a Zn(2+) binding site. Residue Glu138 is the Proton acceptor of the active site. Zn(2+) is bound by residues His141, His147, Cys148, Cys153, Cys172, and Cys175.

The protein belongs to the peptidase M54 family. Monomer. It depends on Zn(2+) as a cofactor.

Functionally, probable zinc metalloprotease whose natural substrate is unknown. The polypeptide is Archaemetzincin (Pyrococcus abyssi (strain GE5 / Orsay)).